Here is a 994-residue protein sequence, read N- to C-terminus: Alanine--tRNA ligase, chloroplastic/mitochondrial (994 aa).

Residues 1–29 (MGGLKLPPQTLHGIHGGRRPLTAPSSKPS) form a disordered region. Zn(2+) is bound by residues His672, His676, Cys774, and His778.

Belongs to the class-II aminoacyl-tRNA synthetase family. In terms of assembly, monomer. It depends on Zn(2+) as a cofactor.

It localises to the plastid. The protein resides in the chloroplast. It is found in the mitochondrion. It carries out the reaction tRNA(Ala) + L-alanine + ATP = L-alanyl-tRNA(Ala) + AMP + diphosphate. Its function is as follows. Catalyzes the attachment of alanine to tRNA(Ala) in a two-step reaction: alanine is first activated by ATP to form Ala-AMP and then transferred to the acceptor end of tRNA(Ala). Also edits incorrectly charged tRNA(Ala) via its editing domain. The sequence is that of Alanine--tRNA ligase, chloroplastic/mitochondrial from Populus trichocarpa (Western balsam poplar).